Reading from the N-terminus, the 649-residue chain is ENTH domain-containing protein C19F8.03c (649 aa).

The ENTH domain occupies 2–136 (SPSKWLLTYE…VDYAQVGDAP (135 aa)). Disordered stretches follow at residues 280 to 382 (YLQN…NELE), 409 to 440 (LSAEGTSASPSLDKKSESTNIVQPIPSHPNDS), and 590 to 649 (FTHG…PFRS). A phosphoserine mark is found at serine 285 and serine 287. A compositionally biased stretch (basic residues) spans 299 to 308 (PTLRKKKSIP). 2 stretches are compositionally biased toward polar residues: residues 313–326 (ESSSTIQKENTVQQ) and 340–349 (PETQRTTSRI). Acidic residues predominate over residues 352–381 (QEEEIKEEEMEGEEEEEEEEVPNYESENEL). 3 stretches are compositionally biased toward polar residues: residues 409–418 (LSAEGTSASP), 614–624 (TPYTASKNPFS), and 635–649 (ARNSISTESKNPFRS). Threonine 414 carries the phosphothreonine modification. A Phosphoserine modification is found at serine 417.

The protein localises to the cytoplasm. The sequence is that of ENTH domain-containing protein C19F8.03c from Schizosaccharomyces pombe (strain 972 / ATCC 24843) (Fission yeast).